The chain runs to 492 residues: ATP synthase subunit beta, chloroplastic (492 aa).

170–177 (GGAGVGKT) serves as a coordination point for ATP.

It belongs to the ATPase alpha/beta chains family. F-type ATPases have 2 components, CF(1) - the catalytic core - and CF(0) - the membrane proton channel. CF(1) has five subunits: alpha(3), beta(3), gamma(1), delta(1), epsilon(1). CF(0) has four main subunits: a(1), b(1), b'(1) and c(9-12).

The protein localises to the plastid. Its subcellular location is the chloroplast thylakoid membrane. The catalysed reaction is ATP + H2O + 4 H(+)(in) = ADP + phosphate + 5 H(+)(out). Its function is as follows. Produces ATP from ADP in the presence of a proton gradient across the membrane. The catalytic sites are hosted primarily by the beta subunits. This Angiopteris evecta (Mule's foot fern) protein is ATP synthase subunit beta, chloroplastic.